Here is a 416-residue protein sequence, read N- to C-terminus: MNLETVAKVDPEIVAAVRGELQRQRTHLELIASENFVSQAVMEAYSCVLTNKYAEGYPGKRYYGGCEWADVVENLARERAKALFGAEHANVQPHSGSQANTAVYLAVLNPGDKALGMNLAHGGHLTHGSPVSLSGKYYNFCFYGVDAKTGRIDYDAVARIAREERPRLIVAGASAYPRVIDFARFREIADEVGALLMVDMAHIAGLVAAGIHPNPVPYAHFVTTTTHKTMRGPRGGIILTTREYARDIDKAVFPGVQGGPLMHVIAAKAVALKEAMLPEFKRYQEQIVTNARTLADALMGYGFNLVSGGTDNHLMLVDLRNKNITGREAEDILASVQITVNKNAIPFDPQKPSVTSGIRLGTAALTSRGMDADAMVQVARAIDLALSYGPDEKKLEEARGIVAELCRAFPLYQELD.

(6S)-5,6,7,8-tetrahydrofolate contacts are provided by residues Leu119 and Gly123 to Leu125. N6-(pyridoxal phosphate)lysine is present on Lys228.

It belongs to the SHMT family. Homodimer. Requires pyridoxal 5'-phosphate as cofactor.

The protein localises to the cytoplasm. The enzyme catalyses (6R)-5,10-methylene-5,6,7,8-tetrahydrofolate + glycine + H2O = (6S)-5,6,7,8-tetrahydrofolate + L-serine. The protein operates within one-carbon metabolism; tetrahydrofolate interconversion. It functions in the pathway amino-acid biosynthesis; glycine biosynthesis; glycine from L-serine: step 1/1. Catalyzes the reversible interconversion of serine and glycine with tetrahydrofolate (THF) serving as the one-carbon carrier. This reaction serves as the major source of one-carbon groups required for the biosynthesis of purines, thymidylate, methionine, and other important biomolecules. Also exhibits THF-independent aldolase activity toward beta-hydroxyamino acids, producing glycine and aldehydes, via a retro-aldol mechanism. The sequence is that of Serine hydroxymethyltransferase from Moorella thermoacetica (strain ATCC 39073 / JCM 9320).